We begin with the raw amino-acid sequence, 409 residues long: Argininosuccinate synthase (409 aa).

10 to 18 (AYSGGLDTS) serves as a coordination point for ATP. Tyr-87 contacts L-citrulline. Gly-117 is an ATP binding site. Residues Thr-119, Asn-123, and Asp-124 each contribute to the L-aspartate site. An L-citrulline-binding site is contributed by Asn-123. Arg-127, Ser-175, Ser-184, Glu-260, and Tyr-272 together coordinate L-citrulline.

The protein belongs to the argininosuccinate synthase family. Type 1 subfamily. As to quaternary structure, homotetramer.

The protein localises to the cytoplasm. It carries out the reaction L-citrulline + L-aspartate + ATP = 2-(N(omega)-L-arginino)succinate + AMP + diphosphate + H(+). Its pathway is amino-acid biosynthesis; L-arginine biosynthesis; L-arginine from L-ornithine and carbamoyl phosphate: step 2/3. The chain is Argininosuccinate synthase from Rubrobacter xylanophilus (strain DSM 9941 / JCM 11954 / NBRC 16129 / PRD-1).